A 251-amino-acid chain; its full sequence is Ubiquinone/menaquinone biosynthesis C-methyltransferase UbiE (251 aa).

Residues Thr-74, Asp-95, 123–124 (NA), and Ser-140 each bind S-adenosyl-L-methionine.

It belongs to the class I-like SAM-binding methyltransferase superfamily. MenG/UbiE family.

The enzyme catalyses a 2-demethylmenaquinol + S-adenosyl-L-methionine = a menaquinol + S-adenosyl-L-homocysteine + H(+). The catalysed reaction is a 2-methoxy-6-(all-trans-polyprenyl)benzene-1,4-diol + S-adenosyl-L-methionine = a 5-methoxy-2-methyl-3-(all-trans-polyprenyl)benzene-1,4-diol + S-adenosyl-L-homocysteine + H(+). Its pathway is quinol/quinone metabolism; menaquinone biosynthesis; menaquinol from 1,4-dihydroxy-2-naphthoate: step 2/2. It functions in the pathway cofactor biosynthesis; ubiquinone biosynthesis. Functionally, methyltransferase required for the conversion of demethylmenaquinol (DMKH2) to menaquinol (MKH2) and the conversion of 2-polyprenyl-6-methoxy-1,4-benzoquinol (DDMQH2) to 2-polyprenyl-3-methyl-6-methoxy-1,4-benzoquinol (DMQH2). The protein is Ubiquinone/menaquinone biosynthesis C-methyltransferase UbiE of Yersinia enterocolitica serotype O:8 / biotype 1B (strain NCTC 13174 / 8081).